We begin with the raw amino-acid sequence, 447 residues long: Ribulose bisphosphate carboxylase large chain (447 aa).

Lys5 carries the post-translational modification N6,N6,N6-trimethyllysine. Substrate is bound by residues Asn114 and Thr164. The active-site Proton acceptor is Lys166. A substrate-binding site is contributed by Lys168. Mg(2+)-binding residues include Lys192, Asp194, and Glu195. The residue at position 192 (Lys192) is an N6-carboxylysine. His285 acts as the Proton acceptor in catalysis. Substrate contacts are provided by Arg286, His318, and Ser370.

Belongs to the RuBisCO large chain family. Type I subfamily. As to quaternary structure, heterohexadecamer of 8 large chains and 8 small chains; disulfide-linked. The disulfide link is formed within the large subunit homodimers. It depends on Mg(2+) as a cofactor. The disulfide bond which can form in the large chain dimeric partners within the hexadecamer appears to be associated with oxidative stress and protein turnover.

The protein localises to the plastid. It localises to the chloroplast. It catalyses the reaction 2 (2R)-3-phosphoglycerate + 2 H(+) = D-ribulose 1,5-bisphosphate + CO2 + H2O. The enzyme catalyses D-ribulose 1,5-bisphosphate + O2 = 2-phosphoglycolate + (2R)-3-phosphoglycerate + 2 H(+). Its function is as follows. RuBisCO catalyzes two reactions: the carboxylation of D-ribulose 1,5-bisphosphate, the primary event in carbon dioxide fixation, as well as the oxidative fragmentation of the pentose substrate in the photorespiration process. Both reactions occur simultaneously and in competition at the same active site. This Camassia leichtlinii (Western quamash) protein is Ribulose bisphosphate carboxylase large chain.